Here is a 1234-residue protein sequence, read N- to C-terminus: DNA-directed RNA polymerase subunit beta (1234 aa).

Belongs to the RNA polymerase beta chain family. As to quaternary structure, the RNAP catalytic core consists of 2 alpha, 1 beta, 1 beta' and 1 omega subunit. When a sigma factor is associated with the core the holoenzyme is formed, which can initiate transcription.

The catalysed reaction is RNA(n) + a ribonucleoside 5'-triphosphate = RNA(n+1) + diphosphate. Its function is as follows. DNA-dependent RNA polymerase catalyzes the transcription of DNA into RNA using the four ribonucleoside triphosphates as substrates. The chain is DNA-directed RNA polymerase subunit beta from Clostridium perfringens (strain ATCC 13124 / DSM 756 / JCM 1290 / NCIMB 6125 / NCTC 8237 / Type A).